The chain runs to 651 residues: Transcription termination factor FttA (651 aa).

The archaeal CPSF-KH domain stretch occupies residues 1–200; it reads MTFLIKRETQ…ITGLGGFREV (200 aa). Positions 12–79 are KHa; it reads DQILRDIRAV…ISVRPDPEVL (68 aa). The tract at residues 80–147 is KHb; sequence LPPEEAEKLI…WAPKVVRTPP (68 aa). The metallo-beta-lactamase N-terminus stretch occupies residues 188 to 398; the sequence is WIRITGLGGF…LVMESTYGGA (211 aa). Histidine 256, histidine 258, aspartate 260, histidine 261, histidine 344, and aspartate 367 together coordinate Zn(2+). Residues 399-592 form a beta-Casp region; sequence NDIQMPREEA…MEVHTIDGFS (194 aa). Residues 593-651 are metallo-beta-lactamase C-terminus; the sequence is GHADRRELMNYVAKVRPRPERIITVHGEPQKCLDLATSIHRKFGISTRAPNNLDTIRLR. Histidine 618 lines the Zn(2+) pocket.

Belongs to the metallo-beta-lactamase superfamily. RNA-metabolizing metallo-beta-lactamase-like family. FttA subfamily. As to quaternary structure, homodimer. Interacts with RNA polymerase (RNAP), interacts with the Spt4-Spt5 complex. Zn(2+) is required as a cofactor.

Functionally, terminates transcription on the whole genome. Termination is linked to FttA-mediated RNA cleavage and does not require NTP hydrolysis. Cleaves endonucleolytically at the RNA exit channel of RNA polymerase (RNAP); the 5'-3' exonuclease activity of this protein degrades the nascent RNA released from RNAP. Has nuclease activity on single-stranded RNA. The polypeptide is Transcription termination factor FttA (Pyrococcus horikoshii (strain ATCC 700860 / DSM 12428 / JCM 9974 / NBRC 100139 / OT-3)).